The sequence spans 321 residues: uncharacterized protein (321 aa).

At 1–5 the chain is on the cytoplasmic side; the sequence is MKQQA. The chain crosses the membrane as a helical span at residues 6-26; the sequence is GIGILLALTTAICWGALPIAM. Residues 17-144 enclose the EamA 1 domain; sequence ICWGALPIAM…LLSGLVMFFN (128 aa). Residues 27–35 are Periplasmic-facing; sequence KQVLEVMEP. The helical transmembrane segment at 36 to 56 threads the bilayer; that stretch reads PTIVFYRFLMASIGLGAILAV. The Cytoplasmic portion of the chain corresponds to 57-70; it reads KKRLPPLRVFRKPR. A helical transmembrane segment spans residues 71-91; it reads WLILLAVATAGLFGNFILFSS. At 92–99 the chain is on the periplasmic side; the sequence is SLQYLSPT. Residues 100–120 traverse the membrane as a helical segment; sequence ASQVIGQLSPVGMMVASVFIL. The Cytoplasmic portion of the chain corresponds to 121 to 130; sequence KEKMRSTQVV. Residues 131 to 151 traverse the membrane as a helical segment; that stretch reads GALMLLSGLVMFFNTSLVEIF. The Periplasmic segment spans residues 152 to 156; sequence TKLTD. The helical transmembrane segment at 157-177 threads the bilayer; that stretch reads YTWGVIFGVGAATVWVSYGVA. The EamA 2 domain maps to 169–292; the sequence is TVWVSYGVAQ…GYLGAFVVVA (124 aa). Residues 178–190 lie on the Cytoplasmic side of the membrane; it reads QKVLLRRLASPQI. The chain crosses the membrane as a helical span at residues 191-211; the sequence is LFLLYTLCTIALFPLAKPGVI. Over 212-216 the chain is Periplasmic; that stretch reads AQLSH. The helical transmembrane segment at 217 to 237 threads the bilayer; it reads WQLACLIFCGLNTLVGYGALA. Over 238-249 the chain is Cytoplasmic; the sequence is EAMARWQAAQVS. The helical transmembrane segment at 250–270 threads the bilayer; it reads AIITLTPLFTLFFSDLLSLAW. Residues 271 to 278 lie on the Periplasmic side of the membrane; it reads PDFFARPM. A helical membrane pass occupies residues 279–299; it reads LNLLGYLGAFVVVAGAMYSAI. Residues 300–321 are Cytoplasmic-facing; it reads GHRIWGGLRKHTTVVSQPRAGE.

It belongs to the EamA transporter family.

It localises to the cell inner membrane. This is an uncharacterized protein from Escherichia coli O157:H7.